The sequence spans 168 residues: Mitochondrial ATP-independent inner membrane protease subunit 1a (168 aa).

Residues Met-1 to His-47 constitute a mitochondrion transit peptide. Residues Ser-50 and Lys-94 contribute to the active site.

This sequence belongs to the peptidase S26 family. IMP1 subfamily. Heterodimer of 2 subunits, IMP1A/B and IMP12.

Its subcellular location is the mitochondrion inner membrane. Its function is as follows. Catalyzes the removal of transit peptides required for the targeting of proteins from the mitochondrial matrix, across the inner membrane, into the inter-membrane space. This chain is Mitochondrial ATP-independent inner membrane protease subunit 1a, found in Arabidopsis thaliana (Mouse-ear cress).